We begin with the raw amino-acid sequence, 280 residues long: 2,3,4,5-tetrahydropyridine-2,6-dicarboxylate N-succinyltransferase (280 aa).

It belongs to the transferase hexapeptide repeat family.

It is found in the cytoplasm. It carries out the reaction (S)-2,3,4,5-tetrahydrodipicolinate + succinyl-CoA + H2O = (S)-2-succinylamino-6-oxoheptanedioate + CoA. It participates in amino-acid biosynthesis; L-lysine biosynthesis via DAP pathway; LL-2,6-diaminopimelate from (S)-tetrahydrodipicolinate (succinylase route): step 1/3. In Methylorubrum extorquens (strain PA1) (Methylobacterium extorquens), this protein is 2,3,4,5-tetrahydropyridine-2,6-dicarboxylate N-succinyltransferase.